The following is a 366-amino-acid chain: Histidinol-phosphate aminotransferase 2 (366 aa).

Lys226 is subject to N6-(pyridoxal phosphate)lysine.

It belongs to the class-II pyridoxal-phosphate-dependent aminotransferase family. Histidinol-phosphate aminotransferase subfamily. As to quaternary structure, homodimer. Requires pyridoxal 5'-phosphate as cofactor.

The enzyme catalyses L-histidinol phosphate + 2-oxoglutarate = 3-(imidazol-4-yl)-2-oxopropyl phosphate + L-glutamate. Its pathway is amino-acid biosynthesis; L-histidine biosynthesis; L-histidine from 5-phospho-alpha-D-ribose 1-diphosphate: step 7/9. In Haemophilus influenzae (strain 86-028NP), this protein is Histidinol-phosphate aminotransferase 2.